Consider the following 534-residue polypeptide: Probable bifunctional tRNA threonylcarbamoyladenosine biosynthesis protein (534 aa).

The tract at residues 1–324 is kae1; that stretch reads MICLGIEGTA…YRTDQVEVTW (324 aa). Fe cation-binding residues include H108, H112, and Y129. L-threonylcarbamoyladenylate contacts are provided by residues 129–133, D161, G174, E178, and N258; that span reads YTSGG. D286 contributes to the Fe cation binding site. Residues 335 to 534 form the Protein kinase domain; sequence LPDNIKEKGA…DEIEKRGRYL (200 aa). Residues 340–348 and K361 each bind ATP; that span reads KEKGAEADI. The Proton acceptor; for kinase activity role is filled by D455.

It in the N-terminal section; belongs to the KAE1 / TsaD family. In the C-terminal section; belongs to the protein kinase superfamily. Tyr protein kinase family. BUD32 subfamily. In terms of assembly, component of the KEOPS complex that consists of Kae1, Bud32, Cgi121 and Pcc1; the whole complex dimerizes. It depends on Fe(2+) as a cofactor.

It localises to the cytoplasm. It carries out the reaction L-seryl-[protein] + ATP = O-phospho-L-seryl-[protein] + ADP + H(+). It catalyses the reaction L-threonyl-[protein] + ATP = O-phospho-L-threonyl-[protein] + ADP + H(+). The catalysed reaction is L-threonylcarbamoyladenylate + adenosine(37) in tRNA = N(6)-L-threonylcarbamoyladenosine(37) in tRNA + AMP + H(+). Functionally, required for the formation of a threonylcarbamoyl group on adenosine at position 37 (t(6)A37) in tRNAs that read codons beginning with adenine. Is a component of the KEOPS complex that is probably involved in the transfer of the threonylcarbamoyl moiety of threonylcarbamoyl-AMP (TC-AMP) to the N6 group of A37. The Kae1 domain likely plays a direct catalytic role in this reaction. The Bud32 domain probably displays kinase activity that regulates Kae1 function. This chain is Probable bifunctional tRNA threonylcarbamoyladenosine biosynthesis protein, found in Methanosphaera stadtmanae (strain ATCC 43021 / DSM 3091 / JCM 11832 / MCB-3).